A 231-amino-acid chain; its full sequence is Putative cobalt transport protein CbiM 1 (231 aa).

Helical transmembrane passes span 9–29 (PGPWWQIWWILSIPVFAYGIF), 41–61 (VLPLIAVSGAVIFVLSSLKLP), 74–94 (GMAVILFGPAITSVLSAIVLL), 107–127 (TFGANLMSMGIIGPFVAYAIY), 135–155 (VNFYVSAFVTATLADWVTYVV), and 181–201 (VFAITQIPLAILEASLITLLF).

It belongs to the CbiM family. Forms an energy-coupling factor (ECF) transporter complex composed of an ATP-binding protein (A component, CbiO), a transmembrane protein (T component, CbiQ) and 2 possible substrate-capture proteins (S components, CbiM and CbiN) of unknown stoichimetry.

Its subcellular location is the cell membrane. Its pathway is cofactor biosynthesis; adenosylcobalamin biosynthesis. Part of the energy-coupling factor (ECF) transporter complex CbiMNOQ involved in cobalt import. This is Putative cobalt transport protein CbiM 1 from Methanosarcina barkeri (strain Fusaro / DSM 804).